The chain runs to 173 residues: RTX-III toxin-activating lysine-acyltransferase ApxIIC (173 aa).

Catalysis depends on residues histidine 29 and aspartate 98.

This sequence belongs to the RTX toxin acyltransferase family. In terms of assembly, homodimer.

Its subcellular location is the cytoplasm. It carries out the reaction a fatty acyl-[ACP] + L-lysyl-[protein] = N(6)-(fatty acyl)-L-lysyl-[protein] + holo-[ACP] + H(+). Its function is as follows. Protein-lysine acyltransferase that catalyzes fatty acylation of the protoxin, thereby converting it to the active toxin. The protein is RTX-III toxin-activating lysine-acyltransferase ApxIIC (apxIIIC) of Actinobacillus pleuropneumoniae (Haemophilus pleuropneumoniae).